We begin with the raw amino-acid sequence, 547 residues long: MASKEIKFGRTAREKMLRGVDILADAVKVTLGPKGRNVIIDKSFGAPRITKDGVSVAKEIELEDKFENMGAQMVREVASKTNDIAGDGTTTATVLAQAIVREGNKAVAAGMNPMDLKRGIDLAVADVVKDLQAKAKKISTSEEVAQVGTISANGDKQVGLDIAEAMQKVGNEGVITVEEAKTAETELEVVEGMQFDRGYLSPYFVTNPEKMIADLEDVFILLHEKKLSNLQSMLPVLEAVVQTGKPLLIIAEDVEGEALATLVVNKLRGGLKIAAVKAPGFGDRRKAMLEDIAILTGGTVISEDLGIKLESVTLDMLGRAKKVSISKENTTIVDGSGAKSDIEGRVAQIKAQIEETTSDYDREKLQERLAKLAGGVAVIRVGGSTEVEVKEKKDRIDDALNATRAAVQEGIVPGGGIALLRSSTKITVKGANDDQEAGINIVRRALQSLVRQIAENAGDEASIVVGKVLDKNEDNYGYNAQTSEFGDMIAMGIVDPLKVVRTALQNAASVASLLITTEAMIAELPKKESAGGGMPGGMGGMGGMDMM.

Residues 30 to 33, Lys51, 87 to 91, Gly415, and Asp495 each bind ATP; these read TLGP and DGTTT.

The protein belongs to the chaperonin (HSP60) family. In terms of assembly, forms a cylinder of 14 subunits composed of two heptameric rings stacked back-to-back. Interacts with the co-chaperonin GroES.

Its subcellular location is the cytoplasm. It catalyses the reaction ATP + H2O + a folded polypeptide = ADP + phosphate + an unfolded polypeptide.. Functionally, together with its co-chaperonin GroES, plays an essential role in assisting protein folding. The GroEL-GroES system forms a nano-cage that allows encapsulation of the non-native substrate proteins and provides a physical environment optimized to promote and accelerate protein folding. The sequence is that of Chaperonin GroEL from Rhizobium leguminosarum bv. trifolii (strain WSM2304).